The sequence spans 175 residues: Ferritin light chain (175 aa).

Serine 2 is subject to N-acetylserine. Residues glutamine 7–alanine 156 enclose the Ferritin-like diiron domain. Fe cation contacts are provided by glutamate 54, glutamate 58, glutamate 61, and glutamate 64.

The protein belongs to the ferritin family. In terms of assembly, oligomer of 24 subunits. There are two types of subunits: L (light) chain and H (heavy) chain. The major chain can be light or heavy, depending on the species and tissue type. The functional molecule forms a roughly spherical shell with a diameter of 12 nm and contains a central cavity into which the insoluble mineral iron core is deposited. Interacts with NCOA4.

It is found in the cytoplasmic vesicle. The protein resides in the autophagosome. It localises to the cytoplasm. The protein localises to the autolysosome. Its function is as follows. Stores iron in a soluble, non-toxic, readily available form. Important for iron homeostasis. Iron is taken up in the ferrous form and deposited as ferric hydroxides after oxidation. Also plays a role in delivery of iron to cells. Mediates iron uptake in capsule cells of the developing kidney. Delivery to lysosomes by the cargo receptor NCOA4 for autophagic degradation and release or iron. In Bos taurus (Bovine), this protein is Ferritin light chain (FTL).